The following is a 411-amino-acid chain: MATINDNYLKLKAGYLFPEIARRVNAFAEANPDAKIIRLGIGDVTEPLPAACRSAMIQAVEEMGDRSSFKGYGPEQGYAWLREKIATQDFQARGADVDAAEIFISDGSKCDTGNILDIFGDNNIIAVTDPVYPVYVDTNVMAGHTGAANEKGEFEGLVYLPVTAENNFTAEIPSQKVDLIYLCFPNNPTGATATKEHLQAWVDYAKAHNSIIFFDAAYESYITDPSLPHSIYEIEGAREVAIEFRSFSKNAGFTGTRCALTVVPKTLKAKAADGSDVELWKLWNRRQSTKFNGVSYIVQRGAEAVYSEAGQAQVKALVSFYLDNAKIIREKLTAAGLSVYGGVNAPYVWVKTPNGLSSWDFFDQLLQTVNVVGTPGSGFGAAGEGYFRVSAFNSRENVEEAMKRITEKFKL.

Substrate-binding residues include tyrosine 15 and glycine 42. Pyridoxal 5'-phosphate-binding positions include tyrosine 72, 108-109 (SK), tyrosine 132, asparagine 187, tyrosine 218, and 246-248 (SFS). Lysine 109, tyrosine 132, and asparagine 187 together coordinate substrate. Lysine 249 is subject to N6-(pyridoxal phosphate)lysine. 2 residues coordinate pyridoxal 5'-phosphate: arginine 257 and asparagine 292. Residues asparagine 292 and arginine 388 each coordinate substrate.

Belongs to the class-I pyridoxal-phosphate-dependent aminotransferase family. LL-diaminopimelate aminotransferase subfamily. In terms of assembly, homodimer. Pyridoxal 5'-phosphate serves as cofactor.

It catalyses the reaction (2S,6S)-2,6-diaminopimelate + 2-oxoglutarate = (S)-2,3,4,5-tetrahydrodipicolinate + L-glutamate + H2O + H(+). It participates in amino-acid biosynthesis; L-lysine biosynthesis via DAP pathway; LL-2,6-diaminopimelate from (S)-tetrahydrodipicolinate (aminotransferase route): step 1/1. In terms of biological role, involved in the synthesis of meso-diaminopimelate (m-DAP or DL-DAP), required for both lysine and peptidoglycan biosynthesis. Catalyzes the direct conversion of tetrahydrodipicolinate to LL-diaminopimelate. This chain is LL-diaminopimelate aminotransferase 1, found in Nostoc sp. (strain PCC 7120 / SAG 25.82 / UTEX 2576).